The sequence spans 424 residues: Tyrosine--tRNA ligase (424 aa).

L-tyrosine is bound at residue tyrosine 37. The short motif at 42–51 is the 'HIGH' region element; sequence PTADSLHLGH. Residues tyrosine 175 and glutamine 179 each coordinate L-tyrosine. The short motif at 235-239 is the 'KMSKS' region element; sequence KFGKT. Lysine 238 contacts ATP. The region spanning 357–414 is the S4 RNA-binding domain; sequence ADLMQALVDAELQPSRGQARKTIASNAVTINGEKQSDPEYIFNDEDRLFGRYTLLRRG.

The protein belongs to the class-I aminoacyl-tRNA synthetase family. TyrS type 1 subfamily. Homodimer.

The protein resides in the cytoplasm. It carries out the reaction tRNA(Tyr) + L-tyrosine + ATP = L-tyrosyl-tRNA(Tyr) + AMP + diphosphate + H(+). Its function is as follows. Catalyzes the attachment of tyrosine to tRNA(Tyr) in a two-step reaction: tyrosine is first activated by ATP to form Tyr-AMP and then transferred to the acceptor end of tRNA(Tyr). This chain is Tyrosine--tRNA ligase, found in Salmonella agona (strain SL483).